A 256-amino-acid polypeptide reads, in one-letter code: Undecaprenyl-diphosphatase (256 aa).

Transmembrane regions (helical) follow at residues 5–25 (IIEI…PISS), 41–61 (NSLM…VFYF), 74–94 (LLSL…VISS), 100–120 (LLEN…IILY), 135–155 (LNFK…IPGV), 180–200 (FLLA…NAIG), 208–228 (LVLI…KFFL), and 234–254 (FSLN…FIII).

It belongs to the UppP family.

Its subcellular location is the cell inner membrane. The catalysed reaction is di-trans,octa-cis-undecaprenyl diphosphate + H2O = di-trans,octa-cis-undecaprenyl phosphate + phosphate + H(+). Catalyzes the dephosphorylation of undecaprenyl diphosphate (UPP). Confers resistance to bacitracin. This Pelagibacter ubique (strain HTCC1062) protein is Undecaprenyl-diphosphatase.